The chain runs to 99 residues: Malonate decarboxylase acyl carrier protein (99 aa).

Residue S25 is modified to O-(phosphoribosyl dephospho-coenzyme A)serine.

The protein belongs to the MdcC family. In terms of processing, covalently binds the prosthetic group of malonate decarboxylase.

It is found in the cytoplasm. Its function is as follows. Subunit of malonate decarboxylase, it is an acyl carrier protein to which acetyl and malonyl thioester residues are bound via a 2'-(5''-phosphoribosyl)-3'-dephospho-CoA prosthetic group and turn over during the catalytic mechanism. This is Malonate decarboxylase acyl carrier protein from Pseudomonas putida (strain GB-1).